The sequence spans 271 residues: Ribosome-recycling factor, chloroplastic (271 aa).

The transit peptide at 1 to 78 (MAASSLSSAT…LQNRAGTFRC (78 aa)) directs the protein to the chloroplast. Residues 213–260 (AVRNIRRDALKSYEKLEKEKKLSEDNVKDLSADLQKLTDEYMKKVESI) are a coiled coil.

It belongs to the RRF family. As to quaternary structure, modeling onto the 70S ribosome suggests it binds to PSRP1. In terms of tissue distribution, restricted to photosynthetic tissues.

The protein resides in the plastid. It localises to the chloroplast stroma. Functionally, responsible for the release of ribosomes from messenger RNA at the termination of chloroplastic protein biosynthesis. This is Ribosome-recycling factor, chloroplastic (RRF) from Spinacia oleracea (Spinach).